We begin with the raw amino-acid sequence, 938 residues long: Isoleucine--tRNA ligase (938 aa).

A 'HIGH' region motif is present at residues 65–75; that stretch reads PYANGSIHIGH. Residue E568 participates in L-isoleucyl-5'-AMP binding. Residues 609 to 613 carry the 'KMSKS' region motif; sequence KMSKS. K612 contacts ATP. Residues C905, C908, C921, and C924 each coordinate Zn(2+).

This sequence belongs to the class-I aminoacyl-tRNA synthetase family. IleS type 1 subfamily. In terms of assembly, monomer. The cofactor is Zn(2+).

It localises to the cytoplasm. It catalyses the reaction tRNA(Ile) + L-isoleucine + ATP = L-isoleucyl-tRNA(Ile) + AMP + diphosphate. In terms of biological role, catalyzes the attachment of isoleucine to tRNA(Ile). As IleRS can inadvertently accommodate and process structurally similar amino acids such as valine, to avoid such errors it has two additional distinct tRNA(Ile)-dependent editing activities. One activity is designated as 'pretransfer' editing and involves the hydrolysis of activated Val-AMP. The other activity is designated 'posttransfer' editing and involves deacylation of mischarged Val-tRNA(Ile). The polypeptide is Isoleucine--tRNA ligase (Mannheimia succiniciproducens (strain KCTC 0769BP / MBEL55E)).